We begin with the raw amino-acid sequence, 463 residues long: Chaperone SurA (463 aa).

Residues methionine 1–alanine 25 form the signal peptide. 2 consecutive PpiC domains span residues glycine 174–glutamate 276 and valine 289–glycine 388. 2 disordered regions span residues alanine 329–glycine 348 and glycine 434–arginine 463. Positions asparagine 439–alanine 452 are enriched in low complexity. Pro residues predominate over residues leucine 453–arginine 463.

The protein localises to the periplasm. The enzyme catalyses [protein]-peptidylproline (omega=180) = [protein]-peptidylproline (omega=0). In terms of biological role, chaperone involved in the correct folding and assembly of outer membrane proteins. Recognizes specific patterns of aromatic residues and the orientation of their side chains, which are found more frequently in integral outer membrane proteins. May act in both early periplasmic and late outer membrane-associated steps of protein maturation. The sequence is that of Chaperone SurA from Xanthomonas oryzae pv. oryzae (strain KACC10331 / KXO85).